Here is a 466-residue protein sequence, read N- to C-terminus: Ribulose bisphosphate carboxylase large chain (466 aa).

Lysine 5 carries the post-translational modification N6,N6,N6-trimethyllysine. Asparagine 114 and threonine 164 together coordinate substrate. The active-site Proton acceptor is lysine 166. Lysine 168 contributes to the substrate binding site. Mg(2+)-binding residues include lysine 192, aspartate 194, and glutamate 195. At lysine 192 the chain carries N6-carboxylysine. The active-site Proton acceptor is histidine 285. Residues arginine 286, histidine 318, and serine 370 each coordinate substrate.

Belongs to the RuBisCO large chain family. Type I subfamily. As to quaternary structure, heterohexadecamer of 8 large chains and 8 small chains; disulfide-linked. The disulfide link is formed within the large subunit homodimers. Mg(2+) is required as a cofactor. In terms of processing, the disulfide bond which can form in the large chain dimeric partners within the hexadecamer appears to be associated with oxidative stress and protein turnover.

Its subcellular location is the plastid. The protein localises to the chloroplast. The catalysed reaction is 2 (2R)-3-phosphoglycerate + 2 H(+) = D-ribulose 1,5-bisphosphate + CO2 + H2O. It carries out the reaction D-ribulose 1,5-bisphosphate + O2 = 2-phosphoglycolate + (2R)-3-phosphoglycerate + 2 H(+). Its function is as follows. RuBisCO catalyzes two reactions: the carboxylation of D-ribulose 1,5-bisphosphate, the primary event in carbon dioxide fixation, as well as the oxidative fragmentation of the pentose substrate in the photorespiration process. Both reactions occur simultaneously and in competition at the same active site. This chain is Ribulose bisphosphate carboxylase large chain, found in Eremothamnus marlothianus.